The sequence spans 286 residues: Bifunctional protein FolD (286 aa).

Residues Gly166–Ser168 and Ser191 each bind NADP(+).

Belongs to the tetrahydrofolate dehydrogenase/cyclohydrolase family. In terms of assembly, homodimer.

It carries out the reaction (6R)-5,10-methylene-5,6,7,8-tetrahydrofolate + NADP(+) = (6R)-5,10-methenyltetrahydrofolate + NADPH. The enzyme catalyses (6R)-5,10-methenyltetrahydrofolate + H2O = (6R)-10-formyltetrahydrofolate + H(+). It functions in the pathway one-carbon metabolism; tetrahydrofolate interconversion. Catalyzes the oxidation of 5,10-methylenetetrahydrofolate to 5,10-methenyltetrahydrofolate and then the hydrolysis of 5,10-methenyltetrahydrofolate to 10-formyltetrahydrofolate. The polypeptide is Bifunctional protein FolD (Lactiplantibacillus plantarum (strain ATCC BAA-793 / NCIMB 8826 / WCFS1) (Lactobacillus plantarum)).